A 226-amino-acid chain; its full sequence is MKLCVALDLSTKEECLQLTKELKNLDIWLKVGLRAYLRDGFKFIEELKKVDDFKIFLDLKIHDIPNTMADACEEISKLGIDMINIHASAGKIAMQEVMTRLSKFSKRPLVLAVSALTSFDEENFFSIYRQKIEEAVINFSKISYENGLDGMVCSVFESKIIKEHTQKNFLTLTPGIRPFGEKNDDQKRVANLTMARENLSDFIVVGRPIYKDNNPRKICEKILQEI.

Substrate contacts are provided by residues Asp-8, Lys-30, 58-67 (DLKIHDIPNT), Thr-117, Arg-177, Gln-186, Gly-206, and Arg-207. The active-site Proton donor is the Lys-60.

It belongs to the OMP decarboxylase family. Type 1 subfamily. Homodimer.

The enzyme catalyses orotidine 5'-phosphate + H(+) = UMP + CO2. The protein operates within pyrimidine metabolism; UMP biosynthesis via de novo pathway; UMP from orotate: step 2/2. Its function is as follows. Catalyzes the decarboxylation of orotidine 5'-monophosphate (OMP) to uridine 5'-monophosphate (UMP). In Campylobacter jejuni subsp. doylei (strain ATCC BAA-1458 / RM4099 / 269.97), this protein is Orotidine 5'-phosphate decarboxylase.